The following is a 506-amino-acid chain: NAD(P)H-quinone oxidoreductase chain 4, chloroplastic (506 aa).

The next 14 helical transmembrane spans lie at 5–25 (FPLL…IPFL), 35–55 (WYTL…FIYK), 88–108 (MPLI…AWPI), 114–134 (LFYF…LSQD), 135–155 (ILLF…LLSL), 168–188 (FILY…TMAF), 209–229 (ALEI…LPAF), 243–263 (HYST…YGLI), 275–295 (VIFS…GALT), 309–329 (SSIS…DLGL), 331–351 (GAMM…FLAG), 386–406 (SLAL…LGFL), 415–435 (FIAL…IYLL), and 463–483 (IFIM…PNLT).

This sequence belongs to the complex I subunit 4 family.

Its subcellular location is the plastid. The protein localises to the chloroplast thylakoid membrane. It catalyses the reaction a plastoquinone + NADH + (n+1) H(+)(in) = a plastoquinol + NAD(+) + n H(+)(out). The enzyme catalyses a plastoquinone + NADPH + (n+1) H(+)(in) = a plastoquinol + NADP(+) + n H(+)(out). The polypeptide is NAD(P)H-quinone oxidoreductase chain 4, chloroplastic (Chaetosphaeridium globosum (Charophycean green alga)).